Reading from the N-terminus, the 319-residue chain is Acetyl-coenzyme A carboxylase carboxyl transferase subunit alpha (319 aa).

Residues 43–296 (LRDKSIELTR…KKQLLFDLSE (254 aa)) enclose the CoA carboxyltransferase C-terminal domain.

The protein belongs to the AccA family. Acetyl-CoA carboxylase is a heterohexamer composed of biotin carboxyl carrier protein (AccB), biotin carboxylase (AccC) and two subunits each of ACCase subunit alpha (AccA) and ACCase subunit beta (AccD).

It localises to the cytoplasm. The catalysed reaction is N(6)-carboxybiotinyl-L-lysyl-[protein] + acetyl-CoA = N(6)-biotinyl-L-lysyl-[protein] + malonyl-CoA. It functions in the pathway lipid metabolism; malonyl-CoA biosynthesis; malonyl-CoA from acetyl-CoA: step 1/1. Functionally, component of the acetyl coenzyme A carboxylase (ACC) complex. First, biotin carboxylase catalyzes the carboxylation of biotin on its carrier protein (BCCP) and then the CO(2) group is transferred by the carboxyltransferase to acetyl-CoA to form malonyl-CoA. The polypeptide is Acetyl-coenzyme A carboxylase carboxyl transferase subunit alpha (Baumannia cicadellinicola subsp. Homalodisca coagulata).